Reading from the N-terminus, the 853-residue chain is DNA mismatch repair protein MutS (853 aa).

Gly614–Ser621 lines the ATP pocket.

Belongs to the DNA mismatch repair MutS family.

Its function is as follows. This protein is involved in the repair of mismatches in DNA. It is possible that it carries out the mismatch recognition step. This protein has a weak ATPase activity. This chain is DNA mismatch repair protein MutS, found in Escherichia coli (strain SE11).